We begin with the raw amino-acid sequence, 144 residues long: Bacilliredoxin BrxA (144 aa).

Catalysis depends on nucleophile residues Cys-53 and Cys-55. An S-bacillithiol cysteine disulfide modification is found at Cys-53. Positions 53-55 (CGC) match the CXC active site motif motif. An intrachain disulfide couples Cys-53 to Cys-55.

The protein belongs to the bacilliredoxin family. In terms of processing, N-terminal Cys of the CXC active site motif can react with bacillithiol (BSH) to form mixed disulfides. S-bacillithiolation protects Cys residues against overoxidation by acting as a redox switch in response to oxidative stress.

S-bacillithiolation is the formation of mixed disulfide bonds between protein thiols and the general thiol reductant bacillithiol (BSH) under oxidative stress. BSH is an equivalent of glutathione (GSH) in Firmicutes. This protein is a dithiol bacilliredoxin, which debacillithiolates (removes BSH) the S-bacillithiolated OhrR (OhrR-SSB) in vitro and in vivo NaOCl-generated S-bacillithiolated MetE (MetE-SSB). Involved in maintaining redox homeostasis in response to disulfide stress conditions. Has a redox potential of -130 mV. Displays weak protein disulfide isomerase activity in vitro. The protein is Bacilliredoxin BrxA of Bacillus subtilis (strain 168).